The primary structure comprises 455 residues: Chromosomal replication initiator protein DnaA (455 aa).

A domain I, interacts with DnaA modulators region spans residues 1-74; that stretch reads MSEQEIWEKV…LYEAIGHEIA (74 aa). Positions 74–116 are domain II; that stretch reads APVFYTEEELKSLHTSEQKEENQPEQPAKKYTPGVDEAVIGGE. Residues 85 to 95 show a composition bias toward basic and acidic residues; sequence SLHTSEQKEEN. Residues 85-104 are disordered; the sequence is SLHTSEQKEENQPEQPAKKY. Positions 117–333 are domain III, AAA+ region; the sequence is QFNTHNTFET…GALTRVLAFS (217 aa). The ATP site is built by glycine 161, glycine 163, lysine 164, and threonine 165. A domain IV, binds dsDNA region spans residues 334-455; that stretch reads KLQGQPITTE…ENLEKEIRNQ (122 aa).

Belongs to the DnaA family. As to quaternary structure, oligomerizes as a right-handed, spiral filament on DNA at oriC.

Its subcellular location is the cytoplasm. Its function is as follows. Plays an essential role in the initiation and regulation of chromosomal replication. ATP-DnaA binds to the origin of replication (oriC) to initiate formation of the DNA replication initiation complex once per cell cycle. Binds the DnaA box (a 9 base pair repeat at the origin) and separates the double-stranded (ds)DNA. Forms a right-handed helical filament on oriC DNA; dsDNA binds to the exterior of the filament while single-stranded (ss)DNA is stabiized in the filament's interior. The ATP-DnaA-oriC complex binds and stabilizes one strand of the AT-rich DNA unwinding element (DUE), permitting loading of DNA polymerase. After initiation quickly degrades to an ADP-DnaA complex that is not apt for DNA replication. Binds acidic phospholipids. The chain is Chromosomal replication initiator protein DnaA from Staphylococcus saprophyticus subsp. saprophyticus (strain ATCC 15305 / DSM 20229 / NCIMB 8711 / NCTC 7292 / S-41).